We begin with the raw amino-acid sequence, 215 residues long: Nucleoside triphosphate pyrophosphatase (215 aa).

Asp-77 acts as the Proton acceptor in catalysis.

This sequence belongs to the Maf family. It depends on a divalent metal cation as a cofactor.

Its subcellular location is the cytoplasm. It catalyses the reaction a ribonucleoside 5'-triphosphate + H2O = a ribonucleoside 5'-phosphate + diphosphate + H(+). The catalysed reaction is a 2'-deoxyribonucleoside 5'-triphosphate + H2O = a 2'-deoxyribonucleoside 5'-phosphate + diphosphate + H(+). Functionally, nucleoside triphosphate pyrophosphatase. May have a dual role in cell division arrest and in preventing the incorporation of modified nucleotides into cellular nucleic acids. The sequence is that of Nucleoside triphosphate pyrophosphatase from Rickettsia africae (strain ESF-5).